The following is a 168-amino-acid chain: S-ribosylhomocysteine lyase (168 aa).

Fe cation contacts are provided by His54, His58, and Cys128.

It belongs to the LuxS family. As to quaternary structure, homodimer. Fe cation is required as a cofactor.

It carries out the reaction S-(5-deoxy-D-ribos-5-yl)-L-homocysteine = (S)-4,5-dihydroxypentane-2,3-dione + L-homocysteine. Functionally, involved in the synthesis of autoinducer 2 (AI-2) which is secreted by bacteria and is used to communicate both the cell density and the metabolic potential of the environment. The regulation of gene expression in response to changes in cell density is called quorum sensing. Catalyzes the transformation of S-ribosylhomocysteine (RHC) to homocysteine (HC) and 4,5-dihydroxy-2,3-pentadione (DPD). In Neisseria meningitidis serogroup A / serotype 4A (strain DSM 15465 / Z2491), this protein is S-ribosylhomocysteine lyase.